A 110-amino-acid polypeptide reads, in one-letter code: Protein P2 (110 aa).

Residues 72–82 show a composition bias toward polar residues; sequence KLPTTSGSSSA. The segment at 72–110 is disordered; that stretch reads KLPTTSGSSSAGAIVPAGSNTQGQYKAPPKKGIKRKYPA. The span at 99-110 shows a compositional bias: basic residues; it reads PPKKGIKRKYPA.

This chain is Protein P2, found in Oryza sativa (Rice).